The primary structure comprises 197 residues: Lactoylglutathione lyase-like protein terB (197 aa).

An N-terminal signal peptide occupies residues 1-19; the sequence is MARFAVLQLLLPLAAGLTG. N-linked (GlcNAc...) asparagine glycosylation is found at Asn82, Asn99, and Asn140.

Belongs to the glyoxalase I family.

Functionally, lactoylglutathione lyase-like protein; part of the gene cluster that mediates the biosynthesis of terrein, a fungal metabolite with ecological, antimicrobial, antiproliferative, and antioxidative activities. The first step in the pathway is performed by the polyketide synthase terA that produces 4-hydroxy-6-methylpyranon (4-HMP), orsellinic acid (OA), and 2,3-dehydro-6-hydroxymellein (2,3-dehydro-6-HM) by condensing acetyl-CoA with two, three, or four malonyl-CoA units, respectively. 4-HMP and OA are not pathway intermediates, but are rather shunt or side products. 2,3-dehydro-6-HM is further converted to 6-hydroxymellein (6-HM) by the 6-hydroxymellein synthase terB. The monooxygenases terC and terD, the multicopper oxidase terE and the Kelch-like protein terF are then involved in the transformation of 6-HM to terrein. Even if they are co-regulated with the other terrein cluster genes, terH and terI seem to be dispensable for terrein production; whereas one or both of the 2 transporters terG and terJ are probably required for efficient secretion of metabolites. In Aspergillus terreus (strain NIH 2624 / FGSC A1156), this protein is Lactoylglutathione lyase-like protein terB.